Consider the following 49-residue polypeptide: Small, acid-soluble spore protein K (49 aa).

The tract at residues 1 to 49 (MRNKSRGFPNMNNNKFEGEPRAKDDFASKRPDGSTNTHPQERMRASGKR) is disordered. 2 stretches are compositionally biased toward basic and acidic residues: residues 16–32 (FEGE…KRPD) and 39–49 (PQERMRASGKR).

It belongs to the SspK family.

It is found in the spore core. The protein is Small, acid-soluble spore protein K of Bacillus licheniformis (strain ATCC 14580 / DSM 13 / JCM 2505 / CCUG 7422 / NBRC 12200 / NCIMB 9375 / NCTC 10341 / NRRL NRS-1264 / Gibson 46).